The following is a 248-amino-acid chain: Large ribosomal subunit protein uL30 (248 aa).

The disordered stretch occupies residues 22–42 (KSQEKARAERQAEIEKKKAAN). Positions 24 to 42 (QEKARAERQAEIEKKKAAN) are enriched in basic and acidic residues.

The protein belongs to the universal ribosomal protein uL30 family. As to quaternary structure, component of the large ribosomal subunit (LSU). Mature N.crassa ribosomes consist of a small (40S) and a large (60S) subunit. The 40S small subunit contains 1 molecule of ribosomal RNA (18S rRNA) and at least 32 different proteins. The large 60S subunit contains 3 rRNA molecules (26S, 5.8S and 5S rRNA) and at least 42 different proteins.

It localises to the cytoplasm. Its function is as follows. Component of the ribosome, a large ribonucleoprotein complex responsible for the synthesis of proteins in the cell. The small ribosomal subunit (SSU) binds messenger RNAs (mRNAs) and translates the encoded message by selecting cognate aminoacyl-transfer RNA (tRNA) molecules. The large subunit (LSU) contains the ribosomal catalytic site termed the peptidyl transferase center (PTC), which catalyzes the formation of peptide bonds, thereby polymerizing the amino acids delivered by tRNAs into a polypeptide chain. The nascent polypeptides leave the ribosome through a tunnel in the LSU and interact with protein factors that function in enzymatic processing, targeting, and the membrane insertion of nascent chains at the exit of the ribosomal tunnel. The sequence is that of Large ribosomal subunit protein uL30 (rpl-7) from Neurospora crassa (strain ATCC 24698 / 74-OR23-1A / CBS 708.71 / DSM 1257 / FGSC 987).